The primary structure comprises 37 residues: Large ribosomal subunit protein bL36 (37 aa).

The protein belongs to the bacterial ribosomal protein bL36 family.

The protein is Large ribosomal subunit protein bL36 of Streptomyces avermitilis (strain ATCC 31267 / DSM 46492 / JCM 5070 / NBRC 14893 / NCIMB 12804 / NRRL 8165 / MA-4680).